The primary structure comprises 934 residues: Bifunctional uridylyltransferase/uridylyl-removing enzyme (934 aa).

The uridylyltransferase stretch occupies residues 1 to 379 (MSAHDLKLEE…TFSRRKRKLS (379 aa)). Residues 380 to 736 (ADGDFVSENH…AKPHTFEAVT (357 aa)) form a uridylyl-removing region. The region spanning 496 to 613 (VDEHLLRCIA…IDFADTVQTM (118 aa)) is the HD domain. ACT domains lie at 737–819 (EITV…VLAK) and 848–931 (VIEV…RSSQ).

This sequence belongs to the GlnD family. Requires Mg(2+) as cofactor.

It carries out the reaction [protein-PII]-L-tyrosine + UTP = [protein-PII]-uridylyl-L-tyrosine + diphosphate. The catalysed reaction is [protein-PII]-uridylyl-L-tyrosine + H2O = [protein-PII]-L-tyrosine + UMP + H(+). Uridylyltransferase (UTase) activity is inhibited by glutamine, while glutamine activates uridylyl-removing (UR) activity. Modifies, by uridylylation and deuridylylation, the PII regulatory proteins (GlnB and homologs), in response to the nitrogen status of the cell that GlnD senses through the glutamine level. Under low glutamine levels, catalyzes the conversion of the PII proteins and UTP to PII-UMP and PPi, while under higher glutamine levels, GlnD hydrolyzes PII-UMP to PII and UMP (deuridylylation). Thus, controls uridylylation state and activity of the PII proteins, and plays an important role in the regulation of nitrogen assimilation and metabolism. The protein is Bifunctional uridylyltransferase/uridylyl-removing enzyme of Brucella anthropi (strain ATCC 49188 / DSM 6882 / CCUG 24695 / JCM 21032 / LMG 3331 / NBRC 15819 / NCTC 12168 / Alc 37) (Ochrobactrum anthropi).